Reading from the N-terminus, the 160-residue chain is ATP synthase subunit b (160 aa).

The helical transmembrane segment at 15 to 35 (LAIVIGVLFWFLRGFLGGILE) threads the bilayer.

The protein belongs to the ATPase B chain family. F-type ATPases have 2 components, F(1) - the catalytic core - and F(0) - the membrane proton channel. F(1) has five subunits: alpha(3), beta(3), gamma(1), delta(1), epsilon(1). F(0) has four main subunits: a(1), b(1), b'(1) and c(10-14). The alpha and beta chains form an alternating ring which encloses part of the gamma chain. F(1) is attached to F(0) by a central stalk formed by the gamma and epsilon chains, while a peripheral stalk is formed by the delta, b and b' chains.

Its subcellular location is the cellular thylakoid membrane. Functionally, f(1)F(0) ATP synthase produces ATP from ADP in the presence of a proton or sodium gradient. F-type ATPases consist of two structural domains, F(1) containing the extramembraneous catalytic core and F(0) containing the membrane proton channel, linked together by a central stalk and a peripheral stalk. During catalysis, ATP synthesis in the catalytic domain of F(1) is coupled via a rotary mechanism of the central stalk subunits to proton translocation. In terms of biological role, component of the F(0) channel, it forms part of the peripheral stalk, linking F(1) to F(0). This Synechococcus sp. (strain CC9902) protein is ATP synthase subunit b.